We begin with the raw amino-acid sequence, 214 residues long: Probable transaldolase (214 aa).

The active-site Schiff-base intermediate with substrate is the Lys-83.

The protein belongs to the transaldolase family. Type 3B subfamily.

It localises to the cytoplasm. The catalysed reaction is D-sedoheptulose 7-phosphate + D-glyceraldehyde 3-phosphate = D-erythrose 4-phosphate + beta-D-fructose 6-phosphate. It functions in the pathway carbohydrate degradation; pentose phosphate pathway; D-glyceraldehyde 3-phosphate and beta-D-fructose 6-phosphate from D-ribose 5-phosphate and D-xylulose 5-phosphate (non-oxidative stage): step 2/3. Functionally, transaldolase is important for the balance of metabolites in the pentose-phosphate pathway. The protein is Probable transaldolase of Brevibacillus brevis (strain 47 / JCM 6285 / NBRC 100599).